The primary structure comprises 383 residues: Peroxisomal membrane protein PEX15 (383 aa).

Over 1 to 331 the chain is Cytoplasmic; sequence MAASEIMNNL…AVLKHHFTRS (331 aa). The helical transmembrane segment at 332-349 threads the bilayer; the sequence is VLNKNGLLLTGLLLLLCL. Over 350 to 383 the chain is Lumenal; it reads KKYKSLMAIFKHVPAAFHTVYPQIVGLLKLLASI.

Interacts with PEX6. Interacts with PEX19; targets PEX15 to the peroxisome. Post-translationally, phosphorylated.

The protein resides in the peroxisome membrane. Its subcellular location is the endoplasmic reticulum membrane. Functionally, peroxisomal docking factor that anchors PEX1 and PEX6 to peroxisome membranes. PEX26 is therefore required for the formation of the PEX1-PEX6 AAA ATPase complex, a complex that mediates the extraction of the PEX5 receptor from peroxisomal membrane. The sequence is that of Peroxisomal membrane protein PEX15 (PEX15) from Saccharomyces cerevisiae (strain ATCC 204508 / S288c) (Baker's yeast).